The following is a 134-amino-acid chain: Profilin-2 (134 aa).

A disulfide bridge connects residues Cys-13 and Cys-118. Residues 84–100 carry the Involved in PIP2 interaction motif; it reads AVIRGKKGSGGITIKKT. Phosphothreonine is present on Thr-114.

Belongs to the profilin family. Occurs in many kinds of cells as a complex with monomeric actin in a 1:1 ratio. Post-translationally, phosphorylated by MAP kinases.

The protein resides in the cytoplasm. The protein localises to the cytoskeleton. Its function is as follows. Binds to actin and affects the structure of the cytoskeleton. At high concentrations, profilin prevents the polymerization of actin, whereas it enhances it at low concentrations. In Olea europaea (Common olive), this protein is Profilin-2.